Reading from the N-terminus, the 577-residue chain is Pentatricopeptide repeat-containing protein At2g01390 (577 aa).

PPR repeat units lie at residues 121–155 (DHFTYTTMLDIFGEAGRIQSMYSVFHLMKEKGVLI), 156–190 (DTVTYTSLIHWVSSSGDVDGAMRLWEEMRDNGCEP), 191–225 (TVVSYTAYMKMLFADGRVEEATEVYKEMLRSRVSP), 226–260 (NCHTYTVLMEYLVATGKCEEALDIFFKMQEIGVQP), 261–295 (DKAACNILIAKALKFGETSFMTRVLVYMKENGVVL), 382–416 (DSFVVSAIIETNCDRCRTEGASLAFDYSLEMGIHL), 417–451 (KKSAYLALIGNFLRSNELPKVIEVVKEMVKAQHSL), 452–482 (GCYQGAMLIHRLGFGRRPRLAADVFDLLPDD), 485–519 (GVAAYTALMDVYISAGSPEKAMKILREMREREIMP), and 520–554 (SLGTYDVLLSGLEKTSDFQKEVALLRKEKKSLVAS).

Belongs to the PPR family. P subfamily.

In Arabidopsis thaliana (Mouse-ear cress), this protein is Pentatricopeptide repeat-containing protein At2g01390.